The primary structure comprises 386 residues: MGRVKLKIKKLENTNGRQSTFAKRKNGILKKANELSILCDIDIVLLMFSPTGKAAICCGTRSSMEEVIAKFSQVTPQERTKRKFESLENLKKTFQKLDHDVNIREFIASSNSTVEDLSTQARILQARISEIHGRLSYWTEPDKINNVEHLGQLEISIRQSLDQLRAHKEHFGQQQQAMQIENANFVKDWSTCSMQDGIQIPLEQQLQSMSWILNSNTTNIVTEEHNSIPQREVECSASSSFGSYPGYFGTGKSPEMTIPGQETSFLDELNTGQLKQDTSSQQQFTNNNNITAYNPNLHNDMNHHQTLPPPPLPLTLPHAQVYIPMNQREYHMNGFFEAPPPDSSAYNDNTNQTRFGSSSSSLPCSISMFDEYLFSQVTKTKLSQRF.

Residues 1-53 (MGRVKLKIKKLENTNGRQSTFAKRKNGILKKANELSILCDIDIVLLMFSPTGK) enclose the MADS-box domain. Residues 341-360 (PDSSAYNDNTNQTRFGSSSS) form a disordered region. Residues 344–356 (SAYNDNTNQTRFG) show a composition bias toward polar residues.

In terms of assembly, forms heterodimers with AGL66 and AGL104. Expressed in pollen.

The protein resides in the nucleus. Functionally, probable transcription factor that forms heterodimers with the MADS-box proteins AGL66 and AGL104 and is involved in the regulation of pollen maturation at the late stages of pollen development and pollen tube growth. The protein is Agamous-like MADS-box protein AGL30 of Arabidopsis thaliana (Mouse-ear cress).